We begin with the raw amino-acid sequence, 611 residues long: Phosphomethylpyrimidine synthase (611 aa).

Substrate contacts are provided by residues asparagine 212, methionine 241, tyrosine 270, histidine 306, 326–328 (SRG), 367–370 (DGLR), and glutamate 406. Residue histidine 410 participates in Zn(2+) binding. Tyrosine 433 contributes to the substrate binding site. Zn(2+) is bound at residue histidine 474. 3 residues coordinate [4Fe-4S] cluster: cysteine 554, cysteine 557, and cysteine 562.

It belongs to the ThiC family. In terms of assembly, homodimer. [4Fe-4S] cluster is required as a cofactor.

The catalysed reaction is 5-amino-1-(5-phospho-beta-D-ribosyl)imidazole + S-adenosyl-L-methionine = 4-amino-2-methyl-5-(phosphooxymethyl)pyrimidine + CO + 5'-deoxyadenosine + formate + L-methionine + 3 H(+). Its pathway is cofactor biosynthesis; thiamine diphosphate biosynthesis. In terms of biological role, catalyzes the synthesis of the hydroxymethylpyrimidine phosphate (HMP-P) moiety of thiamine from aminoimidazole ribotide (AIR) in a radical S-adenosyl-L-methionine (SAM)-dependent reaction. This Bartonella bacilliformis (strain ATCC 35685 / KC583 / Herrer 020/F12,63) protein is Phosphomethylpyrimidine synthase.